A 149-amino-acid polypeptide reads, in one-letter code: Calmodulin, striated muscle (149 aa).

4 EF-hand domains span residues 8 to 43 (EQIA…LGQN), 44 to 79 (PTEA…KMRD), 81 to 116 (DSEE…LGEK), and 117 to 149 (LTDE…MTEK). Asp21, Asp23, Asp25, Cys27, Glu32, Asp57, Asp59, Ser61, Thr63, Glu68, Asp94, Asp96, Asn98, Tyr100, and Glu105 together coordinate Ca(2+). An N6,N6,N6-trimethyllysine modification is found at Lys116. The Ca(2+) site is built by Asp130, Asn132, Asp134, Gln136, and Glu141.

The protein belongs to the calmodulin family.

The chain is Calmodulin, striated muscle (CCM1) from Gallus gallus (Chicken).